The primary structure comprises 302 residues: MSDSRRVPITFQGLIQTLNQYWAEQGCVLIQPLDLEVGAGTFHPATFLRALGPEPWNAAYVQPSRRPTDGRYGENPNRLQRYYQYQVAMKPNPDNIQDLYLGSLQALGIDPLVHDLRFVEDNWESPTLGAWGVGWEVWLNGMEVTQFTYFQQAGGLECKPVLGEITYGLERLCMYLQRCDNVYALVWTYGPDGAAVTYGDVYHQNEVEQSTYNFEHANVAELFHRFDACEAEAKHLVEVGLPLPAYEQVTKASHAFNLLDARRAISVTERQRYILRVRALAQGVAQAYYAQREKLGFPGVKQ.

It belongs to the class-II aminoacyl-tRNA synthetase family. Tetramer of two alpha and two beta subunits.

The protein resides in the cytoplasm. The enzyme catalyses tRNA(Gly) + glycine + ATP = glycyl-tRNA(Gly) + AMP + diphosphate. This Xanthomonas oryzae pv. oryzae (strain PXO99A) protein is Glycine--tRNA ligase alpha subunit.